The following is a 1123-amino-acid chain: Ubiquitin carboxyl-terminal hydrolase 43 (1123 aa).

The interval 1–102 is disordered; that stretch reads MDLGPGDAAG…DGARPPGAQG (102 aa). The segment covering 17 to 28 has biased composition (basic residues); that stretch reads RPRRRRSLRRLF. The segment covering 29–39 has biased composition (low complexity); that stretch reads SRFLLALGSRS. One can recognise a USP domain in the interval 101–710; the sequence is QGLKNHGNTC…GAYILFYQKR (610 aa). Cys110 acts as the Nucleophile in catalysis. The segment at 202-221 is disordered; it reads EGSSRGPVSEKLPPEATKTS. The active-site Proton acceptor is the His668. Arg746 is subject to Asymmetric dimethylarginine. Disordered stretches follow at residues 795–826, 854–886, 959–1049, and 1068–1099; these read ISMKAPTTSRAKQGPFKTMPLRWSFGSKEKPP, TGTAGEDEKSASPRSNVALPANSEDGGRAIERG, FQMG…RIPE, and SSLRLPRKASRAPRGSALGMSQRTVPGEQASY. Position 969 is a phosphoserine (Ser969). The segment covering 979 to 990 has biased composition (basic and acidic residues); it reads KDSRRGTSELDR. Over residues 1016-1027 the composition is skewed to low complexity; that stretch reads VSPQVPPVSLVS. The residue at position 1041 (Ser1041) is a Phosphoserine.

The protein belongs to the peptidase C19 family. In terms of tissue distribution, expressed in brain, aorta and lung at low levels.

It carries out the reaction Thiol-dependent hydrolysis of ester, thioester, amide, peptide and isopeptide bonds formed by the C-terminal Gly of ubiquitin (a 76-residue protein attached to proteins as an intracellular targeting signal).. In terms of biological role, may recognize and hydrolyze the peptide bond at the C-terminal Gly of ubiquitin. Involved in the processing of poly-ubiquitin precursors as well as that of ubiquitinated proteins. The chain is Ubiquitin carboxyl-terminal hydrolase 43 (USP43) from Homo sapiens (Human).